The sequence spans 307 residues: D-alanine--D-alanine ligase (307 aa).

The 201-residue stretch at 101 to 301 folds into the ATP-grasp domain; that stretch reads RDVLAAAGVP…FGELVRWMVD (201 aa). An ATP-binding site is contributed by 128–182; the sequence is LPPPYVIKPLGEGSSFGVFIVREDQAYPPQELTRSDWAFGNRVLVESYIGGRELT. Residues D251, E268, and N270 each coordinate Mg(2+).

It belongs to the D-alanine--D-alanine ligase family. Mg(2+) serves as cofactor. Mn(2+) is required as a cofactor.

It localises to the cytoplasm. It carries out the reaction 2 D-alanine + ATP = D-alanyl-D-alanine + ADP + phosphate + H(+). It participates in cell wall biogenesis; peptidoglycan biosynthesis. Cell wall formation. In Beijerinckia indica subsp. indica (strain ATCC 9039 / DSM 1715 / NCIMB 8712), this protein is D-alanine--D-alanine ligase.